The following is a 623-amino-acid chain: Sphingomyelinase C 2 (623 aa).

An N-terminal signal peptide occupies residues 1–25 (MINKITKPKLLIGYYLLLFSLIRCL). 2 stretches are compositionally biased toward low complexity: residues 51-61 (VNSVSINNDPA) and 67-80 (NPASANNNQVNAVP). Residues 51-121 (VNSVSINNDP…DPNPANLASA (71 aa)) are disordered. Polar residues predominate over residues 89–102 (NPVNPASANSNQVN). Low complexity predominate over residues 110–121 (PADPNPANLASA).

The protein localises to the secreted. The catalysed reaction is a sphingomyelin + H2O = phosphocholine + an N-acylsphing-4-enine + H(+). The polypeptide is Sphingomyelinase C 2 (sph2) (Leptospira interrogans serogroup Icterohaemorrhagiae serovar Lai (strain 56601)).